A 174-amino-acid polypeptide reads, in one-letter code: uncharacterized protein (174 aa).

Belongs to the NAD(P)H dehydrogenase (quinone) family.

This is an uncharacterized protein from Bacillus subtilis (strain 168).